Here is a 320-residue protein sequence, read N- to C-terminus: ATP-dependent 6-phosphofructokinase (320 aa).

Glycine 12 provides a ligand contact to ATP. ADP contacts are provided by residues 22–26 (RGVVR) and 55–60 (RYSVSD). Residues 73–74 (RF) and 103–106 (GDGS) each bind ATP. Aspartate 104 contacts Mg(2+). A substrate-binding site is contributed by 126–128 (TID). Aspartate 128 functions as the Proton acceptor in the catalytic mechanism. An ADP-binding site is contributed by arginine 155. Residues arginine 163 and 170 to 172 (MGR) contribute to the substrate site. Residues 186–188 (GCE), lysine 212, and 214–216 (KKH) each bind ADP. Substrate is bound by residues glutamate 223, arginine 244, and 250 to 253 (HIQR).

Belongs to the phosphofructokinase type A (PFKA) family. ATP-dependent PFK group I subfamily. Prokaryotic clade 'B1' sub-subfamily. As to quaternary structure, homotetramer. Mg(2+) is required as a cofactor.

The protein localises to the cytoplasm. It carries out the reaction beta-D-fructose 6-phosphate + ATP = beta-D-fructose 1,6-bisphosphate + ADP + H(+). It participates in carbohydrate degradation; glycolysis; D-glyceraldehyde 3-phosphate and glycerone phosphate from D-glucose: step 3/4. Its activity is regulated as follows. Allosterically activated by ADP and other diphosphonucleosides, and allosterically inhibited by phosphoenolpyruvate. In terms of biological role, catalyzes the phosphorylation of D-fructose 6-phosphate to fructose 1,6-bisphosphate by ATP, the first committing step of glycolysis. In Serratia proteamaculans (strain 568), this protein is ATP-dependent 6-phosphofructokinase.